We begin with the raw amino-acid sequence, 217 residues long: MAQKINPLGFRLGVTQNERSHWFAQQRNYSKDLREDQKIRTCIENYVRTHIKSSSNYGGIARVEIRRKIDLIKVKIYIGFPNLLLIEGRGQGIEKLRNDVLNMLDSVDRKLHIAIEKVAKPYRKPNILAEYIALQLEKRVPFRKTMKKAIELAEREEVEGIQIQIAGRLDGKEIARVEWDRGGRVPLQTIRARIDYCYYPVKTIYGVLGIKIWILEE.

Positions 47 to 119 constitute a KH type-2 domain; the sequence is VRTHIKSSSN…KLHIAIEKVA (73 aa).

The protein belongs to the universal ribosomal protein uS3 family. In terms of assembly, part of the 30S ribosomal subunit.

The protein resides in the plastid. Its subcellular location is the chloroplast. In Pinus thunbergii (Japanese black pine), this protein is Small ribosomal subunit protein uS3c (rps3).